The chain runs to 98 residues: NADH-ubiquinone oxidoreductase chain 4L (98 aa).

3 helical membrane-spanning segments follow: residues 1 to 21 (MPVV…GLLI), 29 to 49 (SLLC…VTVL), and 61 to 81 (IILL…LVMV).

It belongs to the complex I subunit 4L family. Core subunit of respiratory chain NADH dehydrogenase (Complex I) which is composed of 45 different subunits.

Its subcellular location is the mitochondrion inner membrane. The enzyme catalyses a ubiquinone + NADH + 5 H(+)(in) = a ubiquinol + NAD(+) + 4 H(+)(out). Its function is as follows. Core subunit of the mitochondrial membrane respiratory chain NADH dehydrogenase (Complex I) which catalyzes electron transfer from NADH through the respiratory chain, using ubiquinone as an electron acceptor. Part of the enzyme membrane arm which is embedded in the lipid bilayer and involved in proton translocation. The polypeptide is NADH-ubiquinone oxidoreductase chain 4L (MT-ND4L) (Ursus americanus (American black bear)).